A 315-amino-acid polypeptide reads, in one-letter code: Pantothenate kinase (315 aa).

94 to 101 (GSVAVGKS) is a binding site for ATP.

It belongs to the prokaryotic pantothenate kinase family.

The protein localises to the cytoplasm. The catalysed reaction is (R)-pantothenate + ATP = (R)-4'-phosphopantothenate + ADP + H(+). It functions in the pathway cofactor biosynthesis; coenzyme A biosynthesis; CoA from (R)-pantothenate: step 1/5. This Citrobacter koseri (strain ATCC BAA-895 / CDC 4225-83 / SGSC4696) protein is Pantothenate kinase.